The chain runs to 1498 residues: Golgin subfamily A member 3 (1498 aa).

Met1 bears the N-acetylmethionine mark. A disordered region spans residues 1-118; the sequence is MDGASAEQDG…GTSAEGSVRK (118 aa). Position 18 is a phosphoserine (Ser18). Pro residues predominate over residues 27–36; the sequence is PLKPPGPLVP. Ser57 is subject to Phosphoserine. Positions 71 to 81 are enriched in pro residues; it reads PTPPFPDPPSS. The interaction with GOPC stretch occupies residues 121 to 141; sequence LQSLRLSLPMQETQLCSTDSP. 2 disordered regions span residues 166 to 195 and 216 to 325; these read RVKR…MLNP and SVPR…SAST. Residues 172–257 form a golgi-targeting domain region; that stretch reads ERSSQPATKT…DYRTEDSNAG (86 aa). Composition is skewed to polar residues over residues 173–184 and 269–291; these read RSSQPATKTRLF and TKGS…SLSP. Position 272 is a phosphoserine (Ser272). Positions 315–324 are enriched in low complexity; it reads SDSSSYSSAS. Phosphoserine is present on residues Ser385, Ser389, and Ser465. The stretch at 394-1459 forms a coiled coil; that stretch reads VSLESSAAET…ALTVHESLSS (1066 aa). Basic and acidic residues predominate over residues 789 to 801; it reads KEELDRGARRLEE. 4 disordered regions span residues 789–809, 974–993, 1376–1400, and 1440–1498; these read KEEL…TSET, QKQK…KEMK, RGAA…PIKI, and DSLQ…GPGE. Position 983 is a phosphoserine (Ser983). Positions 1376–1387 are enriched in basic and acidic residues; sequence RGAAKTRKEPKG. The residue at position 1392 (Ser1392) is a Phosphoserine. Over residues 1440 to 1452 the composition is skewed to basic and acidic residues; that stretch reads DSLQRQMEEHALT.

Homodimer. Interacts with GOLGA7. Isoform 1 interacts with GOPC while isoform 3 does not. In terms of processing, cleaved by caspases in apoptotic cells. Expressed in all tissues tested. Expressed in liver, testis, lung, heart, salivary gland and kidney.

The protein localises to the cytoplasm. It localises to the golgi apparatus. It is found in the golgi stack membrane. In terms of biological role, golgi auto-antigen; probably involved in maintaining Golgi structure. The protein is Golgin subfamily A member 3 (GOLGA3) of Homo sapiens (Human).